A 1441-amino-acid polypeptide reads, in one-letter code: Envelopment polyprotein (1441 aa).

The N-terminal stretch at 1–13 (MIRMLVLIVVTAA) is a signal peptide. The Lumenal portion of the chain corresponds to 14-200 (SPVYQRCFQD…GSIANSICQN (187 aa)). Asn57 carries an N-linked (GlcNAc...) asparagine; by host glycan. Residues 201-221 (IEIIILVTLTLLIFILLSILS) form a helical membrane-spanning segment. At 222–305 (KTYICYLLMP…RAARVMCKSK (84 aa)) the chain is on the cytoplasmic side. The helical transmembrane segment at 306 to 326 (GPASILSIITAVLVLTFVTPI) threads the bilayer. Residues 327–365 (NSMVLGESKETFELEELPDDMLEMALRINSYYFTCILNY) are Lumenal-facing. The helical transmembrane segment at 366–386 (AVSWGLIIAGLLVGLIFKKYQ) threads the bilayer. Over 387 to 452 (HRFLNIYAMY…LVQYKAKWMM (66 aa)) the chain is Cytoplasmic. Residues 453-473 (NFLIIYIFLILIKDSAIVGQA) traverse the membrane as a helical segment. Topologically, residues 474 to 1395 (TGTDFTTCLE…EPFKNLFGSY (922 aa)) are lumenal. N-linked (GlcNAc...) asparagine; by host glycosylation is found at Asn490 and Asn1177. A helical membrane pass occupies residues 1396 to 1416 (IGIFYTFIISIIALLVIIYVL). At 1417 to 1441 (LPICFKLRDTLRKHDDAYKREMKIR) the chain is on the cytoplasmic side.

This sequence belongs to the orthobunyavirus envelope glycoprotein family. In terms of assembly, glycoprotein C and Glycoprotein N interact with each other. Specific enzymatic cleavages in vivo yield mature proteins including nonstructural protein NSm, glycoprotein C, and glycoprotein N.

The protein localises to the virion membrane. Its subcellular location is the host Golgi apparatus membrane. It localises to the host endoplasmic reticulum membrane. In terms of biological role, glycoprotein C and Glycoprotein N interact with each other and are present at the surface of the virion. They are able to attach the virion to a cell receptor and to promote fusion of membranes after endocytosis of the virion. This Bunyavirus La Crosse protein is Envelopment polyprotein (GP).